The following is a 218-amino-acid chain: MPKSCAARQCCNRYSSRRKQLTFHRFPFSRPELLREWVLNIGRADFKPKQHTVICSEHFRPECFSAFGNRKNLKHNAVPTVFAFQNPTEVCPEVGAGGDSSGRNMDTTLEELQPPTPEGPVQQVLPDREAMEATEAAGLPASPLGLKRPLPGQPSDHSYALSDLDTLKKKLFLTLKENKRLRKRLKAQRLLLRRTCGRLRAYREGQPGPRARRPAQGS.

The segment at 1–82 adopts a THAP-type zinc-finger fold; the sequence is MPKSCAARQC…LKHNAVPTVF (82 aa). 2 disordered regions span residues 97–120 and 133–154; these read GGDSSGRNMDTTLEELQPPTPEGP and ATEAAGLPASPLGLKRPLPGQP. Ser-100 is subject to Phosphoserine. The HCFC1-binding motif (HBM) motif lies at 156-159; it reads DHSY.

In terms of assembly, component of a THAP1/THAP3-HCFC1-OGT complex that contains at least, either THAP1 or THAP3, HCFC1 and OGT. Interacts directly with OGT and HCFC1 (via its HBM). Highest levels in heart, liver and kidney. Lower levels in brain and lung.

Component of a THAP1/THAP3-HCFC1-OGT complex that is required for the regulation of the transcriptional activity of RRM1. In Mus musculus (Mouse), this protein is THAP domain-containing protein 3 (Thap3).